A 116-amino-acid polypeptide reads, in one-letter code: Omega-ctenitoxin-Pn3a (116 aa).

Residues 1 to 19 (MKMKLLGIILLVSFPFVLG) form the signal peptide. The propeptide occupies 20 to 38 (FAGIPIEEGENSVEVGEVE). Disulfide bonds link C41–C58, C48–C64, C55–C90, C57–C78, C66–C76, C96–C102, and C106–C111. The residue at position 115 (H115) is a Histidine amide.

The protein belongs to the neurotoxin 04 (omega-agtx) family. 03 (type II/III omega-agtx) subfamily. In terms of tissue distribution, expressed by the venom gland.

The protein resides in the secreted. This toxin is a potent and practically irreversible antagonist of both Cav2.1/CACNA1A and Cav2.2/CACNA1B calcium channels, while it displays a partial and rapidly reversible block of Cav2.3/CACNA1E calcium channels and no effect on Cav3/CACNA1 calcium channels. Inhibits glutamate uptake from rat brain synaptosomes by an interaction between cysteines from both glutamate transporter and toxin. Blocks potassium-induced exocytosis of synaptic vesicles in brain cortical synaptosomes (IC(50)=1.1 nM). In rat brain, inhibits glutamate release, neuronal death and loss of neurotransmission in the hippocampus resulting from ischemia. In vivo, induces rapid general flaccid paralysis followed by death in 10-30 minutes at dose levels of 5 ug per mouse. The chain is Omega-ctenitoxin-Pn3a from Phoneutria nigriventer (Brazilian armed spider).